We begin with the raw amino-acid sequence, 458 residues long: tRNA modification GTPase MnmE (458 aa).

Residues Arg-22, Glu-84, and Arg-123 each contribute to the (6S)-5-formyl-5,6,7,8-tetrahydrofolate site. A TrmE-type G domain is found at 220–379; it reads GIATAIIGRP…LEKAIADLFF (160 aa). Asn-230 contributes to the K(+) binding site. GTP-binding positions include 230 to 235, 249 to 255, and 274 to 277; these read NVGKSS, TDIAGTT, and DTAG. Ser-234 is a binding site for Mg(2+). K(+)-binding residues include Thr-249, Ile-251, and Thr-254. Thr-255 is a Mg(2+) binding site. Lys-458 lines the (6S)-5-formyl-5,6,7,8-tetrahydrofolate pocket.

It belongs to the TRAFAC class TrmE-Era-EngA-EngB-Septin-like GTPase superfamily. TrmE GTPase family. Homodimer. Heterotetramer of two MnmE and two MnmG subunits. Requires K(+) as cofactor.

Its subcellular location is the cytoplasm. Its function is as follows. Exhibits a very high intrinsic GTPase hydrolysis rate. Involved in the addition of a carboxymethylaminomethyl (cmnm) group at the wobble position (U34) of certain tRNAs, forming tRNA-cmnm(5)s(2)U34. The sequence is that of tRNA modification GTPase MnmE from Bacillus cereus (strain ZK / E33L).